Here is a 595-residue protein sequence, read N- to C-terminus: Aspartate--tRNA(Asp/Asn) ligase (595 aa).

Glutamate 175 serves as a coordination point for L-aspartate. The tract at residues 199–202 (QQFK) is aspartate. L-aspartate contacts are provided by arginine 221 and histidine 451. 221–223 (RDE) provides a ligand contact to ATP. Glutamate 485 contacts ATP. Residue arginine 492 participates in L-aspartate binding. Residue 537–540 (GVDR) coordinates ATP.

It belongs to the class-II aminoacyl-tRNA synthetase family. Type 1 subfamily. As to quaternary structure, homodimer.

It is found in the cytoplasm. It catalyses the reaction tRNA(Asx) + L-aspartate + ATP = L-aspartyl-tRNA(Asx) + AMP + diphosphate. Aspartyl-tRNA synthetase with relaxed tRNA specificity since it is able to aspartylate not only its cognate tRNA(Asp) but also tRNA(Asn). Reaction proceeds in two steps: L-aspartate is first activated by ATP to form Asp-AMP and then transferred to the acceptor end of tRNA(Asp/Asn). The sequence is that of Aspartate--tRNA(Asp/Asn) ligase from Acidiphilium cryptum (strain JF-5).